The sequence spans 316 residues: tRNA methyltransferase 10 homolog B (316 aa).

Residues 73–98 (EKIVAAKKSKRKQEKERRKANRVENS) are a coiled coil. The interval 77 to 96 (AAKKSKRKQEKERRKANRVE) is disordered. In terms of domain architecture, SAM-dependent MTase TRM10-type spans 113-310 (IKERLLEAKH…KGVSSRKGYV (198 aa)).

Belongs to the class IV-like SAM-binding methyltransferase superfamily. TRM10 family.

The enzyme catalyses guanosine(9) in tRNA + S-adenosyl-L-methionine = N(1)-methylguanosine(9) in tRNA + S-adenosyl-L-homocysteine + H(+). In terms of biological role, S-adenosyl-L-methionine-dependent guanine N(1)-methyltransferase that catalyzes the formation of N(1)-methylguanine at position 9 (m1G9) in tRNAs. Probably not able to catalyze formation of N(1)-methyladenine at position 9 (m1A9) in tRNAs. The polypeptide is tRNA methyltransferase 10 homolog B (TRMT10B) (Bos taurus (Bovine)).